Here is a 246-residue protein sequence, read N- to C-terminus: MEAKISVPKYELRGFSLWGFRDMAQCMDFLFDGGRVKRGTLVAMNAEKILTAEQDTELHALLDEAEYKYADGISMVRSIRRKYPGADVSRVAGADLWEALMQRAGREGTPVFLIGGKPSVLAETEQKLRSQWNVNLVGSQDGYFKPEQREPLFERIRASGAAIVTVAMGSPKQEILMRDCRKVHPQALYMGVGGTYDVFTGHVKRAPKVWQNLGLEWLYRLLSQPSRLGRQLRLLKFVSYYYRGKM.

The protein belongs to the glycosyltransferase 26 family.

The enzyme catalyses UDP-N-acetyl-alpha-D-mannosaminouronate + N-acetyl-alpha-D-glucosaminyl-di-trans,octa-cis-undecaprenyl diphosphate = beta-D-ManNAcA-(1-&gt;4)-alpha-D-GlcNAc-di-trans,octa-cis-undecaprenyl diphosphate + UDP + H(+). It functions in the pathway bacterial outer membrane biogenesis; enterobacterial common antigen biosynthesis. Functionally, catalyzes the synthesis of Und-PP-GlcNAc-ManNAcA (Lipid II), the second lipid-linked intermediate involved in enterobacterial common antigen (ECA) synthesis. This Serratia proteamaculans (strain 568) protein is UDP-N-acetyl-D-mannosaminuronic acid transferase.